Reading from the N-terminus, the 136-residue chain is Large ribosomal subunit protein uL16 (136 aa).

This sequence belongs to the universal ribosomal protein uL16 family. In terms of assembly, part of the 50S ribosomal subunit.

Its function is as follows. Binds 23S rRNA and is also seen to make contacts with the A and possibly P site tRNAs. In Vibrio vulnificus (strain YJ016), this protein is Large ribosomal subunit protein uL16.